The sequence spans 483 residues: UDP-N-acetylmuramoyl-L-alanyl-D-glutamate--2,6-diaminopimelate ligase 2 (483 aa).

Ser30 contributes to the UDP-N-acetyl-alpha-D-muramoyl-L-alanyl-D-glutamate binding site. 111–117 provides a ligand contact to ATP; the sequence is GTNGKTT. UDP-N-acetyl-alpha-D-muramoyl-L-alanyl-D-glutamate contacts are provided by residues 156 to 157, Thr183, and Arg191; that span reads TT. Lys223 is modified (N6-carboxylysine). Meso-2,6-diaminopimelate is bound by residues Arg380, 404–407, Gly456, and Glu460; that span reads DNPR. The short motif at 404–407 is the Meso-diaminopimelate recognition motif element; it reads DNPR.

It belongs to the MurCDEF family. MurE subfamily. The cofactor is Mg(2+). Post-translationally, carboxylation is probably crucial for Mg(2+) binding and, consequently, for the gamma-phosphate positioning of ATP.

It localises to the cytoplasm. The catalysed reaction is UDP-N-acetyl-alpha-D-muramoyl-L-alanyl-D-glutamate + meso-2,6-diaminopimelate + ATP = UDP-N-acetyl-alpha-D-muramoyl-L-alanyl-gamma-D-glutamyl-meso-2,6-diaminopimelate + ADP + phosphate + H(+). It participates in cell wall biogenesis; peptidoglycan biosynthesis. In terms of biological role, catalyzes the addition of meso-diaminopimelic acid to the nucleotide precursor UDP-N-acetylmuramoyl-L-alanyl-D-glutamate (UMAG) in the biosynthesis of bacterial cell-wall peptidoglycan. This chain is UDP-N-acetylmuramoyl-L-alanyl-D-glutamate--2,6-diaminopimelate ligase 2, found in Clostridium acetobutylicum (strain ATCC 824 / DSM 792 / JCM 1419 / IAM 19013 / LMG 5710 / NBRC 13948 / NRRL B-527 / VKM B-1787 / 2291 / W).